Here is a 230-residue protein sequence, read N- to C-terminus: Potassium/proton antiporter CemA (230 aa).

Transmembrane regions (helical) follow at residues 7–27, 106–126, 145–165, and 181–201; these read LPSL…SFSF, IILH…FFFL, LNDS…VGFH, and LGWA…PVIL.

Belongs to the CemA family.

The protein resides in the plastid. It localises to the chloroplast inner membrane. It carries out the reaction K(+)(in) + H(+)(out) = K(+)(out) + H(+)(in). Functionally, contributes to K(+)/H(+) antiport activity by supporting proton efflux to control proton extrusion and homeostasis in chloroplasts in a light-dependent manner to modulate photosynthesis. Prevents excessive induction of non-photochemical quenching (NPQ) under continuous-light conditions. Indirectly promotes efficient inorganic carbon uptake into chloroplasts. The chain is Potassium/proton antiporter CemA from Lolium perenne (Perennial ryegrass).